The chain runs to 202 residues: Urease accessory protein UreG (202 aa).

11-18 (GPVGSGKT) provides a ligand contact to GTP.

This sequence belongs to the SIMIBI class G3E GTPase family. UreG subfamily. In terms of assembly, homodimer. UreD, UreF and UreG form a complex that acts as a GTP-hydrolysis-dependent molecular chaperone, activating the urease apoprotein by helping to assemble the nickel containing metallocenter of UreC. The UreE protein probably delivers the nickel.

It is found in the cytoplasm. In terms of biological role, facilitates the functional incorporation of the urease nickel metallocenter. This process requires GTP hydrolysis, probably effectuated by UreG. The chain is Urease accessory protein UreG from Magnetococcus marinus (strain ATCC BAA-1437 / JCM 17883 / MC-1).